Reading from the N-terminus, the 447-residue chain is UPF0210 protein LSL_0162 (447 aa).

Belongs to the UPF0210 family. Homodimer.

The chain is UPF0210 protein LSL_0162 from Ligilactobacillus salivarius (strain UCC118) (Lactobacillus salivarius).